We begin with the raw amino-acid sequence, 470 residues long: Argininosuccinate lyase (470 aa).

Belongs to the lyase 1 family. Argininosuccinate lyase subfamily.

The protein localises to the cytoplasm. The enzyme catalyses 2-(N(omega)-L-arginino)succinate = fumarate + L-arginine. The protein operates within amino-acid biosynthesis; L-arginine biosynthesis; L-arginine from L-ornithine and carbamoyl phosphate: step 3/3. The sequence is that of Argininosuccinate lyase from Leptospira borgpetersenii serovar Hardjo-bovis (strain L550).